The chain runs to 259 residues: Ribosomal RNA large subunit methyltransferase E (259 aa).

Residues glycine 49, tryptophan 51, aspartate 69, aspartate 88, and aspartate 112 each coordinate S-adenosyl-L-methionine. Lysine 152 serves as the catalytic Proton acceptor. In terms of domain architecture, TRAM spans 199 to 257 (PIAEGDEHTVEIVDTGDEGDGIARIEGYTLFVDDAAEGDTVDVTVTDLKPNYGFAERRD).

The protein belongs to the class I-like SAM-binding methyltransferase superfamily. RNA methyltransferase RlmE family.

Its subcellular location is the cytoplasm. It carries out the reaction uridine(2552) in 23S rRNA + S-adenosyl-L-methionine = 2'-O-methyluridine(2552) in 23S rRNA + S-adenosyl-L-homocysteine + H(+). Specifically methylates the uridine in position 2552 of 23S rRNA at the 2'-O position of the ribose in the fully assembled 50S ribosomal subunit. This Halobacterium salinarum (strain ATCC 29341 / DSM 671 / R1) protein is Ribosomal RNA large subunit methyltransferase E.